Reading from the N-terminus, the 325-residue chain is Melanocortin receptor 5 (325 aa).

At 1 to 37 (MNSSFHLHFLDLGLNATEGNLSGLSVRNASSPCEDMG) the chain is on the extracellular side. N2, N15, N20, and N28 each carry an N-linked (GlcNAc...) asparagine glycan. The chain crosses the membrane as a helical span at residues 38–61 (IAVEVFLALGLISLLENILVIGAI). Topologically, residues 62 to 73 (VRNRNLHIPMYF) are cytoplasmic. The chain crosses the membrane as a helical span at residues 74–97 (FVGSLAVADMLVSLSNFWETITIY). The Extracellular segment spans residues 98 to 114 (LLTNKHLVMADASVRHL). Residues 115–138 (DNVFDSMICISVVASMCSLLAIAV) traverse the membrane as a helical segment. Residues 139–155 (DRYVTIFCRLRYQRIMT) lie on the Cytoplasmic side of the membrane. Residues 156 to 179 (GRRSGAIIAGIWAFCTSCGTVFIV) form a helical membrane-spanning segment. At 180–186 (YYESTYV) the chain is on the extracellular side. The chain crosses the membrane as a helical span at residues 187–211 (VVCLIAMFLTMLLLMASLYTHMFLL). Residues 212 to 239 (ARTHVRRIAALPGHSSVRQRTGVKGAIT) are Cytoplasmic-facing. The helical transmembrane segment at 240–265 (LAMLLGVFIICWAPFFLHLILMISCP) threads the bilayer. The Extracellular portion of the chain corresponds to 266–273 (QNLYCSCF). The chain crosses the membrane as a helical span at residues 274–297 (MSHFNMYLILIMCNSVIDPLIYAF). Topologically, residues 298–325 (RSQEMRKTFKEIVCFQGFRTPCRFPSTY) are cytoplasmic. C311 carries S-palmitoyl cysteine lipidation.

Belongs to the G-protein coupled receptor 1 family.

It is found in the cell membrane. In terms of biological role, receptor for MSH (alpha, beta and gamma) and ACTH. The activity of this receptor is mediated by G proteins which activate adenylate cyclase. This receptor is a possible mediator of the immunomodulation properties of melanocortins. The sequence is that of Melanocortin receptor 5 (MC5R) from Ovis aries (Sheep).